The following is a 105-amino-acid chain: Nucleoid-associated protein RPE_4812 (105 aa).

Belongs to the YbaB/EbfC family. Homodimer.

The protein resides in the cytoplasm. Its subcellular location is the nucleoid. Functionally, binds to DNA and alters its conformation. May be involved in regulation of gene expression, nucleoid organization and DNA protection. The protein is Nucleoid-associated protein RPE_4812 of Rhodopseudomonas palustris (strain BisA53).